Here is a 392-residue protein sequence, read N- to C-terminus: Large ribosomal subunit protein uL3 (392 aa).

Belongs to the universal ribosomal protein uL3 family.

Its subcellular location is the cytoplasm. The L3 protein is a component of the large subunit of cytoplasmic ribosomes. The chain is Large ribosomal subunit protein uL3 (rpl3) from Aspergillus fumigatus (strain ATCC MYA-4609 / CBS 101355 / FGSC A1100 / Af293) (Neosartorya fumigata).